Reading from the N-terminus, the 150-residue chain is Transcriptional repressor NrdR (150 aa).

A zinc finger lies at 3 to 34; the sequence is CPFCQHDHSKVIDSRVIDAGSAIRRRRECSKC. An ATP-cone domain is found at 46 to 136; sequence LLVVKRNGVT…VYKSFDSADD (91 aa).

The protein belongs to the NrdR family. Requires Zn(2+) as cofactor.

Its function is as follows. Negatively regulates transcription of bacterial ribonucleotide reductase nrd genes and operons by binding to NrdR-boxes. This is Transcriptional repressor NrdR from Corynebacterium glutamicum (strain ATCC 13032 / DSM 20300 / JCM 1318 / BCRC 11384 / CCUG 27702 / LMG 3730 / NBRC 12168 / NCIMB 10025 / NRRL B-2784 / 534).